The primary structure comprises 619 residues: Threonine--tRNA ligase (619 aa).

Positions M1–E143 are editing domain. The tract at residues P201–P500 is catalytic. 3 residues coordinate Zn(2+): C293, H345, and H469.

The protein belongs to the class-II aminoacyl-tRNA synthetase family. As to quaternary structure, homodimer. Requires Zn(2+) as cofactor.

Its subcellular location is the cytoplasm. It catalyses the reaction tRNA(Thr) + L-threonine + ATP = L-threonyl-tRNA(Thr) + AMP + diphosphate + H(+). Catalyzes the attachment of threonine to tRNA(Thr) in a two-step reaction: L-threonine is first activated by ATP to form Thr-AMP and then transferred to the acceptor end of tRNA(Thr). Also edits incorrectly charged L-seryl-tRNA(Thr). This Methanothrix thermoacetophila (strain DSM 6194 / JCM 14653 / NBRC 101360 / PT) (Methanosaeta thermophila) protein is Threonine--tRNA ligase.